Consider the following 30-residue polypeptide: Trypsin inhibitor 2 (30 aa).

Cystine bridges form between Cys2–Cys19, Cys9–Cys21, and Cys15–Cys27.

This sequence belongs to the protease inhibitor I7 (squash-type serine protease inhibitor) family.

The protein resides in the secreted. Its function is as follows. Inhibits trypsin. This is Trypsin inhibitor 2 from Ecballium elaterium (Squirting cucumber).